A 31-amino-acid chain; its full sequence is Superoxide dismutase [Cu-Zn] (31 aa).

This sequence belongs to the Cu-Zn superoxide dismutase family. Requires Cu cation as cofactor. Zn(2+) serves as cofactor.

The protein localises to the cytoplasm. The enzyme catalyses 2 superoxide + 2 H(+) = H2O2 + O2. Destroys radicals which are normally produced within the cells and which are toxic to biological systems. This Striga hermonthica (Purple witchweed) protein is Superoxide dismutase [Cu-Zn].